A 65-amino-acid polypeptide reads, in one-letter code: Large ribosomal subunit protein uL30 (65 aa).

This sequence belongs to the universal ribosomal protein uL30 family. In terms of assembly, part of the 50S ribosomal subunit.

The chain is Large ribosomal subunit protein uL30 from Onion yellows phytoplasma (strain OY-M).